The sequence spans 145 residues: 3-dehydroquinate dehydratase (145 aa).

Y22 functions as the Proton acceptor in the catalytic mechanism. Substrate-binding residues include N71, H77, and D84. H97 acts as the Proton donor in catalysis. Substrate contacts are provided by residues 98–99 and R108; that span reads LS.

The protein belongs to the type-II 3-dehydroquinase family. In terms of assembly, homododecamer.

The enzyme catalyses 3-dehydroquinate = 3-dehydroshikimate + H2O. It participates in metabolic intermediate biosynthesis; chorismate biosynthesis; chorismate from D-erythrose 4-phosphate and phosphoenolpyruvate: step 3/7. In terms of biological role, catalyzes a trans-dehydration via an enolate intermediate. This chain is 3-dehydroquinate dehydratase, found in Francisella philomiragia subsp. philomiragia (strain ATCC 25017 / CCUG 19701 / FSC 153 / O#319-036).